The primary structure comprises 286 residues: tRNA dimethylallyltransferase (286 aa).

Residues 18-21 are interaction with substrate tRNA; that stretch reads DSMQ.

The protein belongs to the IPP transferase family. Monomer. Mg(2+) serves as cofactor.

It carries out the reaction adenosine(37) in tRNA + dimethylallyl diphosphate = N(6)-dimethylallyladenosine(37) in tRNA + diphosphate. Its function is as follows. Catalyzes the transfer of a dimethylallyl group onto the adenine at position 37 in tRNAs that read codons beginning with uridine, leading to the formation of N6-(dimethylallyl)adenosine (i(6)A). This Tropheryma whipplei (strain TW08/27) (Whipple's bacillus) protein is tRNA dimethylallyltransferase.